Consider the following 244-residue polypeptide: Ribosomal RNA small subunit methyltransferase NEP1 (244 aa).

Residues 1–33 are disordered; that stretch reads MSAASGGFQPRERRFSVQEQDWETTPPKKLRLG. Phosphoserine is present on residues serine 5 and serine 16. S-adenosyl-L-methionine contacts are provided by residues threonine 176, glycine 201, glycine 206, and 219-224; that span reads ISNYPL.

This sequence belongs to the class IV-like SAM-binding methyltransferase superfamily. RNA methyltransferase NEP1 family. In terms of assembly, homodimer. Part of the small subunit (SSU) processome, composed of more than 70 proteins and the RNA chaperone small nucleolar RNA (snoRNA) U3.

The protein localises to the nucleus. Its subcellular location is the nucleolus. The catalysed reaction is pseudouridine(1248) in human 18S rRNA + S-adenosyl-L-methionine = N(1)-methylpseudouridine(1248) in human 18S rRNA + S-adenosyl-L-homocysteine + H(+). S-adenosyl-L-methionine-dependent pseudouridine N(1)-methyltransferase that methylates pseudouridine at position in 18S rRNA. Involved the biosynthesis of the hypermodified N1-methyl-N3-(3-amino-3-carboxypropyl) pseudouridine (m1acp3-Psi) conserved in eukaryotic 18S rRNA. Is not able to methylate uridine at this position. Also has an essential role in 40S ribosomal subunit biogenesis independent on its methyltransferase activity, facilitating the incorporation of ribosomal protein S19 during the formation of pre-ribosomes. Part of the small subunit (SSU) processome, first precursor of the small eukaryotic ribosomal subunit. During the assembly of the SSU processome in the nucleolus, many ribosome biogenesis factors, an RNA chaperone and ribosomal proteins associate with the nascent pre-rRNA and work in concert to generate RNA folding, modifications, rearrangements and cleavage as well as targeted degradation of pre-ribosomal RNA by the RNA exosome. In Mus musculus (Mouse), this protein is Ribosomal RNA small subunit methyltransferase NEP1.